Here is an 87-residue protein sequence, read N- to C-terminus: Small ribosomal subunit protein uS17 (87 aa).

Belongs to the universal ribosomal protein uS17 family. Part of the 30S ribosomal subunit.

Functionally, one of the primary rRNA binding proteins, it binds specifically to the 5'-end of 16S ribosomal RNA. The chain is Small ribosomal subunit protein uS17 from Bacillus mycoides (strain KBAB4) (Bacillus weihenstephanensis).